We begin with the raw amino-acid sequence, 288 residues long: Cyclic UMP-AMP synthase (288 aa).

The interval 1-23 is disordered; it reads MPVPESQLERWSHQGATTTAKKT. Position 46 (Gln-46) interacts with UTP. 46-48 serves as a coordination point for ATP; it reads QGS. Residues Asp-60 and Asp-62 each contribute to the Mg(2+) site. UTP is bound by residues Asp-62 and 116–120; that span reads RKTLK. Asp-129 lines the Mg(2+) pocket. UTP is bound at residue Asn-166. Lys-194, Ser-212, and Glu-265 together coordinate ATP.

It belongs to the CD-NTase family. E01 subfamily. Mg(2+) is required as a cofactor.

It catalyses the reaction UTP + ATP = 3',3'-cUAMP + 2 diphosphate. Cyclic nucleotide synthase (second messenger synthase) of a CBASS antivirus system. CBASS (cyclic oligonucleotide-based antiphage signaling system) provides immunity against bacteriophage. The CD-NTase protein synthesizes cyclic nucleotides in response to infection; these serve as specific second messenger signals. The signals activate a diverse range of effectors, leading to bacterial cell death and thus abortive phage infection. A type I-B(UU) CBASS system. Its function is as follows. Cyclic dinucleotide synthase that catalyzes the synthesis of 3'3'-cyclic UMP-AMP (cUMP-AMP) from UTP and ATP, a second messenger for cell signal transduction. This is Cyclic UMP-AMP synthase from Rhodothermus marinus (strain SG0.5JP17-172).